We begin with the raw amino-acid sequence, 289 residues long: 2-hydroxy-6-oxononadienedioate/2-hydroxy-6-oxononatrienedioate hydrolase (289 aa).

Residues T39–H275 enclose the AB hydrolase-1 domain. The active-site Proton acceptor is H269.

It belongs to the AB hydrolase superfamily. MhpC family. In terms of assembly, homodimer.

It carries out the reaction (2Z,4E)-2-hydroxy-6-oxonona-2,4-dienedioate + H2O = (2Z)-2-hydroxypenta-2,4-dienoate + succinate + H(+). The enzyme catalyses (2Z,4E,7E)-2-hydroxy-6-oxonona-2,4,7-trienedioate + H2O = (2Z)-2-hydroxypenta-2,4-dienoate + fumarate + H(+). Its pathway is aromatic compound metabolism; 3-phenylpropanoate degradation. Catalyzes the cleavage of the C5-C6 bond of 2-hydroxy-6-oxononadienedioate and 2-hydroxy-6-oxononatrienedioate, a dienol ring fission product of the bacterial meta-cleavage pathway for degradation of phenylpropionic acid. The polypeptide is 2-hydroxy-6-oxononadienedioate/2-hydroxy-6-oxononatrienedioate hydrolase (Paraburkholderia xenovorans (strain LB400)).